Consider the following 177-residue polypeptide: Large ribosomal subunit protein uL6 (177 aa).

This sequence belongs to the universal ribosomal protein uL6 family. Part of the 50S ribosomal subunit.

Functionally, this protein binds to the 23S rRNA, and is important in its secondary structure. It is located near the subunit interface in the base of the L7/L12 stalk, and near the tRNA binding site of the peptidyltransferase center. The chain is Large ribosomal subunit protein uL6 from Rickettsia felis (strain ATCC VR-1525 / URRWXCal2) (Rickettsia azadi).